Here is a 387-residue protein sequence, read N- to C-terminus: Phosphoglycerate kinase (387 aa).

Substrate-binding positions include 21-23, Arg36, 59-62, Arg113, and Arg146; these read DLN and HLGR. Residues Lys197, Glu314, and 340-343 each bind ATP; that span reads GGDT.

This sequence belongs to the phosphoglycerate kinase family. In terms of assembly, monomer.

The protein resides in the cytoplasm. It carries out the reaction (2R)-3-phosphoglycerate + ATP = (2R)-3-phospho-glyceroyl phosphate + ADP. Its pathway is carbohydrate degradation; glycolysis; pyruvate from D-glyceraldehyde 3-phosphate: step 2/5. This is Phosphoglycerate kinase from Pectobacterium atrosepticum (strain SCRI 1043 / ATCC BAA-672) (Erwinia carotovora subsp. atroseptica).